The sequence spans 66 residues: Large ribosomal subunit protein uL29 (66 aa).

It belongs to the universal ribosomal protein uL29 family.

In Thermoplasma volcanium (strain ATCC 51530 / DSM 4299 / JCM 9571 / NBRC 15438 / GSS1), this protein is Large ribosomal subunit protein uL29.